The following is a 159-amino-acid chain: Putative ribosomal RNA large subunit methyltransferase H (159 aa).

S-adenosyl-L-methionine-binding positions include leucine 76, glycine 108, and 127–132; that span reads LSAMTF.

Belongs to the RNA methyltransferase RlmH family.

It is found in the cytoplasm. It carries out the reaction pseudouridine(1915) in 23S rRNA + S-adenosyl-L-methionine = N(3)-methylpseudouridine(1915) in 23S rRNA + S-adenosyl-L-homocysteine + H(+). Functionally, specifically methylates the pseudouridine at position 1915 (m3Psi1915) in 23S rRNA. In Methanospirillum hungatei JF-1 (strain ATCC 27890 / DSM 864 / NBRC 100397 / JF-1), this protein is Putative ribosomal RNA large subunit methyltransferase H.